The following is a 78-amino-acid chain: Small ribosomal subunit protein bS18 (78 aa).

Belongs to the bacterial ribosomal protein bS18 family. In terms of assembly, part of the 30S ribosomal subunit. Forms a tight heterodimer with protein bS6.

Functionally, binds as a heterodimer with protein bS6 to the central domain of the 16S rRNA, where it helps stabilize the platform of the 30S subunit. The chain is Small ribosomal subunit protein bS18 from Pediococcus pentosaceus (strain ATCC 25745 / CCUG 21536 / LMG 10740 / 183-1w).